The chain runs to 216 residues: ATP phosphoribosyltransferase (216 aa).

It belongs to the ATP phosphoribosyltransferase family. Short subfamily. As to quaternary structure, heteromultimer composed of HisG and HisZ subunits.

The protein resides in the cytoplasm. The enzyme catalyses 1-(5-phospho-beta-D-ribosyl)-ATP + diphosphate = 5-phospho-alpha-D-ribose 1-diphosphate + ATP. Its pathway is amino-acid biosynthesis; L-histidine biosynthesis; L-histidine from 5-phospho-alpha-D-ribose 1-diphosphate: step 1/9. Catalyzes the condensation of ATP and 5-phosphoribose 1-diphosphate to form N'-(5'-phosphoribosyl)-ATP (PR-ATP). Has a crucial role in the pathway because the rate of histidine biosynthesis seems to be controlled primarily by regulation of HisG enzymatic activity. The sequence is that of ATP phosphoribosyltransferase from Prochlorococcus marinus (strain MIT 9211).